A 478-amino-acid polypeptide reads, in one-letter code: Transcript termination protein A18 (478 aa).

A Helicase ATP-binding domain is found at 98 to 254; it reads KLSTHRPMYM…NDVVNVLKVS (157 aa). 111–118 lines the ATP pocket; the sequence is LSCGFGKT. Positions 204–207 match the DESH box motif; sequence DESH. The Helicase C-terminal domain maps to 302–454; the sequence is PRNNLIVDTV…IVSVSTDKLG (153 aa). Positions 456-478 are disordered; sequence QQEGKEGTKEEPALTKAFSSQIR. Over residues 458 to 468 the composition is skewed to basic and acidic residues; the sequence is EGKEGTKEEPA.

This sequence belongs to the helicase family. Poxviruses subfamily. Interacts with G2. Might be part of a transcription complex composed at least of G2, A18, and H5.

The protein resides in the virion. Its function is as follows. DNA helicase which seems to act as a postreplicative transcription termination factor. Involved in ATP-dependent release of nascent RNA. Forms a stable complex with single-stranded DNA, and to a lesser extent RNA. The sequence is that of Transcript termination protein A18 from Oryctolagus cuniculus (Rabbit).